We begin with the raw amino-acid sequence, 250 residues long: Type III pantothenate kinase (250 aa).

An ATP-binding site is contributed by 6 to 13; the sequence is DVGNTNTV. 103–106 serves as a coordination point for substrate; that stretch reads GADR. Residue Asp105 is the Proton acceptor of the active site. Residue Asp125 coordinates K(+). Thr128 lines the ATP pocket. Thr180 is a substrate binding site.

This sequence belongs to the type III pantothenate kinase family. As to quaternary structure, homodimer. NH4(+) serves as cofactor. It depends on K(+) as a cofactor.

It is found in the cytoplasm. It catalyses the reaction (R)-pantothenate + ATP = (R)-4'-phosphopantothenate + ADP + H(+). It functions in the pathway cofactor biosynthesis; coenzyme A biosynthesis; CoA from (R)-pantothenate: step 1/5. Functionally, catalyzes the phosphorylation of pantothenate (Pan), the first step in CoA biosynthesis. This Frankia alni (strain DSM 45986 / CECT 9034 / ACN14a) protein is Type III pantothenate kinase.